A 295-amino-acid polypeptide reads, in one-letter code: Probable lipid kinase YegS-like (295 aa).

The region spanning 1–129 is the DAGKc domain; the sequence is MQGRKAMLVL…IDLGQAGDQL (129 aa). ATP is bound by residues threonine 39, 65 to 71, and threonine 92; that span reads GDGTLRD. Residues methionine 210, aspartate 213, and leucine 215 each coordinate Mg(2+). Glutamate 264 acts as the Proton acceptor in catalysis.

This sequence belongs to the diacylglycerol/lipid kinase family. YegS lipid kinase subfamily. Mg(2+) is required as a cofactor. Ca(2+) serves as cofactor.

It is found in the cytoplasm. Its function is as follows. Probably phosphorylates lipids; the in vivo substrate is unknown. The protein is Probable lipid kinase YegS-like of Pseudomonas putida (strain ATCC 47054 / DSM 6125 / CFBP 8728 / NCIMB 11950 / KT2440).